We begin with the raw amino-acid sequence, 390 residues long: MADTRELPVFAYIDDVKQLQELRQYLNKHDSVKLDPNGPSETAQNMIEICSTLNVLPSWSQDVDLVLNSISSLIVVVPGEKCEPVVDSFIKNVAPQFYKGTGWASHAGIAVRVLSNLYKGYSNFHTVQEKIFKALVDMCAEARLIGELECNLETLQDRFNTWKTPVEGQREILRAVHRALLVDQRVDQAAKVMTALLGTYTEKDAAAARDDAMECVRTAVVDPKSFSFDHLERLSAVKALKTSDPLMFTALELFISGTLKDYKEFVAKNPKFVTEHLKVDETILLKKIRLLTLMSLAEEKNEISLDELAKQLDILADETLEEFVIDAIQVNAISGKINEMARTLIVSSYQHRRFGTEQWVLLEKRLKVLIANLKQTHNNVHEVNQRIEAL.

Residues Gln-188 to His-351 enclose the PCI domain.

Belongs to the eIF-3 subunit M family. As to quaternary structure, component of the eukaryotic translation initiation factor 3 (eIF-3) complex. Within the eIF-3 complex, interacts directly with eif-3.F. Component of the CSN complex, composed of csn-1, csn-2, csn-3, csn-4, csn-5, csn-6 and csn-7. Within the CSN complex, interacts directly with csn-1 and csn-4.

The protein localises to the cytoplasm. In terms of biological role, component of the eukaryotic translation initiation factor 3 (eIF-3) complex, which is involved in protein synthesis of a specialized repertoire of mRNAs and, together with other initiation factors, stimulates binding of mRNA and methionyl-tRNAi to the 40S ribosome. The eIF-3 complex specifically targets and initiates translation of a subset of mRNAs involved in cell proliferation (Potential). Component of the COP9 signalosome complex (CSN), a complex involved in various cellular and developmental processes. The CSN complex is an essential regulator of the ubiquitin (Ubl) conjugation pathway by mediating the deneddylation of the cullin subunits of the SCF-type E3 ligase complexes, leading to decrease the Ubl ligase activity of SCF. The CSN complex plays an essential role in embryogenesis and oogenesis and is required to regulate microtubule stability in the early embryo. Mediates mei-1 targeting for degradation at the meiosis to mitosis transition via deneddylation of cul-3. In Caenorhabditis elegans, this protein is COP9/Signalosome and eIF3 complex-shared subunit 1.